We begin with the raw amino-acid sequence, 233 residues long: Putative N-acetylmannosamine-6-phosphate 2-epimerase (233 aa).

The protein belongs to the NanE family.

The enzyme catalyses an N-acyl-D-glucosamine 6-phosphate = an N-acyl-D-mannosamine 6-phosphate. It participates in amino-sugar metabolism; N-acetylneuraminate degradation; D-fructose 6-phosphate from N-acetylneuraminate: step 3/5. In terms of biological role, converts N-acetylmannosamine-6-phosphate (ManNAc-6-P) to N-acetylglucosamine-6-phosphate (GlcNAc-6-P). This is Putative N-acetylmannosamine-6-phosphate 2-epimerase from Yersinia pseudotuberculosis serotype O:3 (strain YPIII).